The sequence spans 541 residues: MTGEKIRSLRRDHKPSKEDGDVLEPCEEEATAALGGAFTGGRSGPGGSGKGGKACHKIFSHHHRLQLKAPAVPGPGVPAPPQHNAVTATCPAPACLGGSNPALVADGGGCPSLYPVHECVFKGDVRRLSSLIRTHNIGQKDNHGNTPLHLAVMLGNKECAHLLLAHNAPVKVKNAQGWSPLAEAISYGDRQMITALLRKLKQQSRESVGEKRPRLLKALKELGDFYLELHWDFQSWVPLLSRILPSDACKIYKQGINIRLDTTLIDFTDMKCQRGDLSFIFNGDAAPSESFVVLDNEQKVYQRIHHEESEMETEEEVDILMSSDIYSATLSTKSISFTRAQTGWLFREDKTERVGNFLADFYLVNGLVLESRKRREHLSEEDILRNKAIMESLSKGGSLAEQSFEPVRRQSLTPPPQNTITWEEYISAENGKAPHLGRELVCKESKKTFKATVAMSQEFPLGIESLLNVLEVIAPFKHFNKLREFVQMKLPPGFPVKLDIPVFPTITATVTFQEFRCDEFDGSIFAIPEDYKEDPSRFPDL.

Residues 1–20 (MTGEKIRSLRRDHKPSKEDG) show a composition bias toward basic and acidic residues. A disordered region spans residues 1-53 (MTGEKIRSLRRDHKPSKEDGDVLEPCEEEATAALGGAFTGGRSGPGGSGKGGK). Residues 21–30 (DVLEPCEEEA) are compositionally biased toward acidic residues. The span at 37 to 52 (AFTGGRSGPGGSGKGG) shows a compositional bias: gly residues. ANK repeat units follow at residues 111–142 (PSLYPVHECVFKGDVRRLSSLIRTHNIGQKDN), 143–172 (HGNTPLHLAVMLGNKECAHLLLAHNAPVKV), and 176–205 (QGWSPLAEAISYGDRQMITALLRKLKQQSR). S411 is modified (phosphoserine).

The protein localises to the endoplasmic reticulum membrane. Its function is as follows. Acts as a molecular chaperone for G protein-coupled receptors, regulating their biogenesis and exit from the ER. In Mus musculus (Mouse), this protein is Ankyrin repeat domain-containing protein 13C (Ankrd13c).